A 520-amino-acid chain; its full sequence is TnpB-like protein L770 (520 aa).

The disordered stretch occupies residues 23-44 (KTKKKVFVKKKPPDKKPLKKPV). Positions 474, 477, 491, and 494 each coordinate Zn(2+).

In the central section; belongs to the transposase 2 family. This sequence in the C-terminal section; belongs to the transposase 35 family.

The chain is TnpB-like protein L770 from Acanthamoeba polyphaga mimivirus (APMV).